The following is a 109-amino-acid chain: Probable cytochrome b-c1 complex subunit 7 (109 aa).

This sequence belongs to the UQCRB/QCR7 family. Component of the ubiquinol-cytochrome c oxidoreductase (cytochrome b-c1 complex, complex III, CIII), a multisubunit enzyme composed of 3 respiratory subunits cytochrome b, cytochrome c1 and Rieske protein, 2 core protein subunits, and additional low-molecular weight protein subunits. The complex exists as an obligatory dimer and forms supercomplexes (SCs) in the inner mitochondrial membrane with cytochrome c oxidase (complex IV, CIV).

The protein localises to the mitochondrion inner membrane. Its function is as follows. Component of the ubiquinol-cytochrome c oxidoreductase, a multisubunit transmembrane complex that is part of the mitochondrial electron transport chain which drives oxidative phosphorylation. The respiratory chain contains 3 multisubunit complexes succinate dehydrogenase (complex II, CII), ubiquinol-cytochrome c oxidoreductase (cytochrome b-c1 complex, complex III, CIII) and cytochrome c oxidase (complex IV, CIV), that cooperate to transfer electrons derived from NADH and succinate to molecular oxygen, creating an electrochemical gradient over the inner membrane that drives transmembrane transport and the ATP synthase. The cytochrome b-c1 complex catalyzes electron transfer from ubiquinol to cytochrome c, linking this redox reaction to translocation of protons across the mitochondrial inner membrane, with protons being carried across the membrane as hydrogens on the quinol. In the process called Q cycle, 2 protons are consumed from the matrix, 4 protons are released into the intermembrane space and 2 electrons are passed to cytochrome c. This is Probable cytochrome b-c1 complex subunit 7 from Dictyostelium discoideum (Social amoeba).